The primary structure comprises 275 residues: T-cell ecto-ADP-ribosyltransferase 1 (275 aa).

Residues 1–20 form the signal peptide; the sequence is MPSNICKFFLTWWLIQQVTG. Cystine bridges form between cysteine 41-cysteine 243 and cysteine 141-cysteine 193. N-linked (GlcNAc...) asparagine glycosylation is present at asparagine 58. Positions 61 to 238 constitute a TR mART core domain; the sequence is EKLKVAWEEA…IFLDSPKRKK (178 aa). 3 residues coordinate NAD(+): tyrosine 98, arginine 146, and glutamine 164. Arginine 146 is an active-site residue. Serine 167 is an active-site residue. Serine 202 contacts NAD(+). Residue glutamate 209 is part of the active site. Residue serine 246 is the site of GPI-anchor amidated serine attachment. A propeptide spans 247 to 275 (removed in mature form); that stretch reads SAGTRESCVSLFLVVLTSLLVQLLCLAEP.

This sequence belongs to the Arg-specific ADP-ribosyltransferase family. In terms of tissue distribution, postthymic T-cells.

It is found in the cell membrane. The enzyme catalyses L-arginyl-[protein] + NAD(+) = N(omega)-(ADP-D-ribosyl)-L-arginyl-[protein] + nicotinamide + H(+). It carries out the reaction NAD(+) + H2O = ADP-D-ribose + nicotinamide + H(+). Functionally, has NAD(+) glycohydrolase activity and extremely low ADP-ribosyltransferase activity. In Rattus norvegicus (Rat), this protein is T-cell ecto-ADP-ribosyltransferase 1 (Art2a).